A 323-amino-acid chain; its full sequence is D-alanine--D-alanine ligase (323 aa).

In terms of domain architecture, ATP-grasp spans 121 to 317; sequence RIWFLTNNIN…FTNLIEEIIK (197 aa). 147–199 provides a ligand contact to ATP; it reads PMKRPYVIKPLAQGSSIGVEVIFAEDDFNFADYDFPYGDQVIIEQYIKGQGRE. Mg(2+) is bound by residues Glu-270, Glu-284, and Asn-286.

Belongs to the D-alanine--D-alanine ligase family. Mg(2+) serves as cofactor. Mn(2+) is required as a cofactor.

Its subcellular location is the cytoplasm. It carries out the reaction 2 D-alanine + ATP = D-alanyl-D-alanine + ADP + phosphate + H(+). The protein operates within cell wall biogenesis; peptidoglycan biosynthesis. Functionally, cell wall formation. The protein is D-alanine--D-alanine ligase of Rickettsia peacockii (strain Rustic).